A 150-amino-acid chain; its full sequence is AGADEERAETARLSSFIGAIAIGDLVKVQDDEVGDGTTSVTVLAAELLRLGGSLADSYLDEGFLLDKKQLIYNYPEQLFGAAGVMAIEHADFAGVERLALVTGGEIASTFDHPELVKGATQQILDEAERQVLLSAAEAAEVILRVDNIIK.

Asp-35 provides a ligand contact to Mg(2+). ADP is bound by residues Gly-36, Thr-37, Thr-38, and Ser-39. Positions 36, 37, and 38 each coordinate ATP.

This sequence belongs to the TCP-1 chaperonin family. Component of the chaperonin-containing T-complex (TRiC), a hexadecamer composed of two identical back-to-back stacked rings enclosing a protein folding chamber. Each ring is made up of eight different subunits: TCP1/CCT1, CCT2, CCT3, CCT4, CCT5, CCT6A/CCT6, CCT7, CCT8. Interacts with PACRG. Interacts with FLCN. Interacts with DLEC1. Interacts with SVEP1.

It localises to the cytoplasm. The catalysed reaction is ATP + H2O = ADP + phosphate + H(+). Its function is as follows. Component of the chaperonin-containing T-complex (TRiC), a molecular chaperone complex that assists the folding of actin, tubulin and other proteins upon ATP hydrolysis. The TRiC complex mediates the folding of WRAP53/TCAB1, thereby regulating telomere maintenance. As part of the TRiC complex may play a role in the assembly of BBSome, a complex involved in ciliogenesis regulating transports vesicles to the cilia. The chain is T-complex protein 1 subunit beta from Mesocricetus auratus (Golden hamster).